The following is a 340-amino-acid chain: Phosphoribosylformylglycinamidine cyclo-ligase (340 aa).

This sequence belongs to the AIR synthase family.

Its subcellular location is the cytoplasm. It catalyses the reaction 2-formamido-N(1)-(5-O-phospho-beta-D-ribosyl)acetamidine + ATP = 5-amino-1-(5-phospho-beta-D-ribosyl)imidazole + ADP + phosphate + H(+). It participates in purine metabolism; IMP biosynthesis via de novo pathway; 5-amino-1-(5-phospho-D-ribosyl)imidazole from N(2)-formyl-N(1)-(5-phospho-D-ribosyl)glycinamide: step 2/2. The protein is Phosphoribosylformylglycinamidine cyclo-ligase of Streptococcus pyogenes serotype M1.